The chain runs to 95 residues: Mitochondrial import inner membrane translocase subunit Tim13 (95 aa).

Methionine 1 bears the N-acetylmethionine mark. Serine 7 bears the Phosphoserine mark. The short motif at 46-69 (CFRKCIGKPGGSLDNSEQKCIAMC) is the Twin CX3C motif element. Disulfide bonds link cysteine 46-cysteine 69 and cysteine 50-cysteine 65. Residue lysine 53 is modified to N6-succinyllysine.

Belongs to the small Tim family. As to quaternary structure, heterohexamer; composed of 3 copies of TIMM8 (TIMM8A or TIMM8B) and 3 copies of TIMM13, named soluble 70 kDa complex. Associates with the TIM22 complex, whose core is composed of TIMM22. As to expression, present at high level in liver and brain, and at lower level in muscle and heart. In CNS sections, it is predominantly present in the soma and the dendritic portion of the Purkinje cells of the cerebellum, but not in the glial cells. Scattered expression also is also detected in the brain stem, olfactory bulb, substantia nigra, hippocampus and striatum (at protein level).

Its subcellular location is the mitochondrion inner membrane. In terms of biological role, mitochondrial intermembrane chaperone that participates in the import and insertion of some multi-pass transmembrane proteins into the mitochondrial inner membrane. Also required for the transfer of beta-barrel precursors from the TOM complex to the sorting and assembly machinery (SAM complex) of the outer membrane. Acts as a chaperone-like protein that protects the hydrophobic precursors from aggregation and guide them through the mitochondrial intermembrane space. The TIMM8-TIMM13 complex mediates the import of proteins such as TIMM23, SLC25A12/ARALAR1 and SLC25A13/ARALAR2, while the predominant TIMM9-TIMM10 70 kDa complex mediates the import of much more proteins. This chain is Mitochondrial import inner membrane translocase subunit Tim13 (Timm13), found in Mus musculus (Mouse).